The chain runs to 363 residues: Ribosomal RNA large subunit methyltransferase M (363 aa).

Residues S194, C227–G230, D246, D266, and D284 contribute to the S-adenosyl-L-methionine site. Catalysis depends on K313, which acts as the Proton acceptor.

The protein belongs to the class I-like SAM-binding methyltransferase superfamily. RNA methyltransferase RlmE family. RlmM subfamily. Monomer.

It is found in the cytoplasm. It carries out the reaction cytidine(2498) in 23S rRNA + S-adenosyl-L-methionine = 2'-O-methylcytidine(2498) in 23S rRNA + S-adenosyl-L-homocysteine + H(+). Functionally, catalyzes the 2'-O-methylation at nucleotide C2498 in 23S rRNA. The protein is Ribosomal RNA large subunit methyltransferase M of Haemophilus influenzae (strain PittEE).